Here is a 443-residue protein sequence, read N- to C-terminus: 3-isopropylmalate dehydratase large subunit (443 aa).

Positions 347, 407, and 410 each coordinate [4Fe-4S] cluster.

Belongs to the aconitase/IPM isomerase family. LeuC type 1 subfamily. Heterodimer of LeuC and LeuD. The cofactor is [4Fe-4S] cluster.

The catalysed reaction is (2R,3S)-3-isopropylmalate = (2S)-2-isopropylmalate. It participates in amino-acid biosynthesis; L-leucine biosynthesis; L-leucine from 3-methyl-2-oxobutanoate: step 2/4. Functionally, catalyzes the isomerization between 2-isopropylmalate and 3-isopropylmalate, via the formation of 2-isopropylmaleate. The protein is 3-isopropylmalate dehydratase large subunit of Buchnera aphidicola subsp. Uroleucon obscurum.